The chain runs to 368 residues: UDP-N-acetylglucosamine--N-acetylmuramyl-(pentapeptide) pyrophosphoryl-undecaprenol N-acetylglucosamine transferase (368 aa).

Residues 10 to 12 (TGG), Asn124, Ser196, Ile251, and Gln296 each bind UDP-N-acetyl-alpha-D-glucosamine.

Belongs to the glycosyltransferase 28 family. MurG subfamily.

Its subcellular location is the cell membrane. It carries out the reaction Mur2Ac(oyl-L-Ala-gamma-D-Glu-L-Lys-D-Ala-D-Ala)-di-trans,octa-cis-undecaprenyl diphosphate + UDP-N-acetyl-alpha-D-glucosamine = beta-D-GlcNAc-(1-&gt;4)-Mur2Ac(oyl-L-Ala-gamma-D-Glu-L-Lys-D-Ala-D-Ala)-di-trans,octa-cis-undecaprenyl diphosphate + UDP + H(+). Its pathway is cell wall biogenesis; peptidoglycan biosynthesis. Functionally, cell wall formation. Catalyzes the transfer of a GlcNAc subunit on undecaprenyl-pyrophosphoryl-MurNAc-pentapeptide (lipid intermediate I) to form undecaprenyl-pyrophosphoryl-MurNAc-(pentapeptide)GlcNAc (lipid intermediate II). This chain is UDP-N-acetylglucosamine--N-acetylmuramyl-(pentapeptide) pyrophosphoryl-undecaprenol N-acetylglucosamine transferase, found in Limosilactobacillus fermentum (strain NBRC 3956 / LMG 18251) (Lactobacillus fermentum).